A 408-amino-acid polypeptide reads, in one-letter code: Phosphatidylinositol transfer protein CSR1 (408 aa).

Ser2 carries the N-acetylserine modification. At Ser2 the chain carries Phosphoserine. The CRAL-TRIO domain occupies 157–317; it reads ETGVIKNLEL…YLGGENDNDL (161 aa).

Belongs to the PITP family. Forms a complex with 2 TSA2 subunits. Binds phosphatidylinositol (PtdIns).

The protein resides in the cytoplasm. It is found in the microsome. It localises to the endosome. The catalysed reaction is a 1,2-diacyl-sn-glycero-3-phospho-(1D-myo-inositol)(in) = a 1,2-diacyl-sn-glycero-3-phospho-(1D-myo-inositol)(out). Non-classical phosphatidylinositol (PtdIns) transfer protein (PITP), which exhibits PtdIns-binding/transfer activity in the absence of detectable PtdCho-binding/transfer activity. Activates SPO14/PLD1 (phospholipase D1) by stimulating phosphoinositide synthesis via the STT4 PtdIns 4-kinase. Modulates ArfGAP function through effects on SPO14 activity. Inhibits phosphatidylcholine degradation by PLB1 (phospholipase B1). May also regulate post-Golgi membrane-trafficking events and have a role resistance to oxidative stress. Inhibits fatty acid synthase activity in response to heme depletion and oleic acid starvation, preventing saturated fatty acid (SFA) accumulation. The protein is Phosphatidylinositol transfer protein CSR1 (CSR1) of Saccharomyces cerevisiae (strain ATCC 204508 / S288c) (Baker's yeast).